The sequence spans 57 residues: Large ribosomal subunit protein bL32 (57 aa).

The disordered stretch occupies residues 1–23 (MAVPKKKTSKSKRDKRRATWRHK).

Belongs to the bacterial ribosomal protein bL32 family.

The sequence is that of Large ribosomal subunit protein bL32 from Trichormus variabilis (strain ATCC 29413 / PCC 7937) (Anabaena variabilis).